A 104-amino-acid chain; its full sequence is Pterin-4-alpha-carbinolamine dehydratase (104 aa).

Alanine 2 carries the N-acetylalanine modification. Residues 61–63 (DHH) and 78–81 (STHE) each bind substrate.

This sequence belongs to the pterin-4-alpha-carbinolamine dehydratase family. As to quaternary structure, homotetramer and homodimer. Heterotetramer with HNF1A; formed by a dimer of dimers. Interacts with HNF1B (via HNF-p1 domain); the interaction increases HNF1B transactivation activity.

It is found in the cytoplasm. The protein localises to the nucleus. The catalysed reaction is (4aS,6R)-4a-hydroxy-L-erythro-5,6,7,8-tetrahydrobiopterin = (6R)-L-erythro-6,7-dihydrobiopterin + H2O. Its function is as follows. Involved in tetrahydrobiopterin biosynthesis. Seems to both prevent the formation of 7-pterins and accelerate the formation of quinonoid-BH2. Coactivator for HNF1A-dependent transcription. Regulates the dimerization of homeodomain protein HNF1A and enhances its transcriptional activity. Also acts as a coactivator for HNF1B-dependent transcription. In Bos taurus (Bovine), this protein is Pterin-4-alpha-carbinolamine dehydratase (PCBD1).